The following is a 1881-amino-acid chain: Endoribonuclease Dicer-S (1881 aa).

Positions 41–217 (LLEAALDHNI…DLEEKIQNLE (177 aa)) constitute a Helicase ATP-binding domain. Position 54–61 (54–61 (LNSGSGKT)) interacts with ATP. Positions 165–168 (DECH) match the DECH box motif. In terms of domain architecture, Helicase C-terminal spans 425–594 (SFPSPFTNIL…SMDCGNTESE (170 aa)). In terms of domain architecture, Dicer dsRNA-binding fold spans 622 to 714 (AIGHINRYCA…MPVGKETVKY (93 aa)). The PAZ domain occupies 887 to 1034 (KFVEDIEKSE…LVPELCAIHP (148 aa)). RNase III domains follow at residues 1249–1380 (TSDI…ETSG) and 1625–1783 (FENF…MDSG). Residues Glu1293, Asp1371, Glu1374, Glu1664, Asp1769, and Glu1772 each coordinate Mg(2+). A DRBM domain is found at 1808–1873 (VPRSPVRELL…ARRALRSLKA (66 aa)).

It belongs to the helicase family. Dicer subfamily. Component of the RISC loading complex (RLC), or micro-RNA (miRNA) loading complex (miRLC), which is composed of dicer1, ago2 and tarbp2; dicer1 and tarbp2 are required to process precursor miRNAs (pre-miRNAs) to mature miRNAs and then load them onto ago2. Note that the trimeric RLC/miRLC is also referred to as RISC. Requires Mg(2+) as cofactor. Mn(2+) is required as a cofactor.

Its subcellular location is the cytoplasm. The enzyme catalyses Endonucleolytic cleavage to 5'-phosphomonoester.. Functionally, double-stranded RNA (dsRNA) endoribonuclease playing a central role in short dsRNA-mediated post-transcriptional gene silencing. Cleaves naturally occurring long dsRNAs and short hairpin pre-microRNAs (miRNA) into fragments of twenty-one to twenty-three nucleotides with 3' overhang of two nucleotides, producing respectively short interfering RNAs (siRNA) and mature microRNAs. SiRNAs and miRNAs serve as guide to direct the RNA-induced silencing complex (RISC) to complementary RNAs to degrade them or prevent their translation. Gene silencing mediated by siRNAs, also called RNA interference, controls the elimination of transcripts from mobile and repetitive DNA elements of the genome but also the degradation of exogenous RNA of viral origin for instance. The miRNA pathway on the other side is a mean to specifically regulate the expression of target genes. During embryonic development, at the left-right organizer, post-transcriptionally regulates the expression of dand5 in flow sensor cells. In post-flow stages, acts along with Bicc1 to repress dand5 mRNA translation and decay. Decreased Dand5 expression lifts repression of Nodal and defines leftness by induction of the lateral plate mesoderm Nodal signaling cascade. The sequence is that of Endoribonuclease Dicer-S (dicer1.S) from Xenopus laevis (African clawed frog).